The primary structure comprises 86 residues: MSCSLRSGLVIVFCFILLLLSSNVGCASAARRLRSHKHHHHKVASLDVFNGGERRRALGGVETGEEVVVMDYPQPHRKPPIHNEKS.

The first 29 residues, 1–29 (MSCSLRSGLVIVFCFILLLLSSNVGCASA), serve as a signal peptide directing secretion. The propeptide occupies 30–70 (ARRLRSHKHHHHKVASLDVFNGGERRRALGGVETGEEVVVM). Tyrosine 72 carries the post-translational modification Sulfotyrosine. Proline 80 carries the hydroxyproline modification. The propeptide occupies 84-86 (EKS).

The protein belongs to the RGF family. As to quaternary structure, binds to LRR receptor-like serine/threonine-protein kinases to trigger their dimerization with SERK proteins and subsequent signaling. As to expression, expressed in stems, hypocotyls, cotyledons, leaves, flowers, shoot apex, siliques, stamens and petals.

The protein resides in the endoplasmic reticulum. The protein localises to the secreted. Functionally, signaling peptide (root growth factor) that regulates the pattern of root growth and lateral root development by modulating the length and the number of cortical cells in the root apical meristem (RAM), and the anticlinal asymmetric cell divisions in lateral root initiation cells. Also involved in the regulation of hypocotyl bending and root gravitropism in a PIN2-traffic dependent manner, thus influencing the formation of auxin gradients. Maintains the postembryonic root stem cell niche. In Arabidopsis thaliana (Mouse-ear cress), this protein is Protein GOLVEN 1.